A 246-amino-acid polypeptide reads, in one-letter code: Submandibular gland secretory Glx-rich protein CA (246 aa).

The N-terminal stretch at 1–18 (MLVVLLTAALLALSSAQG) is a signal peptide. Residues 14-223 (SSAQGTDEEV…SGRPKKPLLP (210 aa)) form a disordered region. Composition is skewed to low complexity over residues 39–50 (PVDSGSDPPSAD), 58–71 (EGESAAPANEEPPA), 81–93 (QQEPTQAENQEPP), 104–116 (QQEPTQAENQEPP), 127–141 (QQEPTQAEDQQPPAT), 150–159 (QQESTQAENQ), and 178–196 (VESPPSSPENSQEQPQQTN). A run of 5 repeats spans residues 67–89 (EEPPATSGSEEEQQQQEPTQAEN), 90–112 (QEPPATSGSEEEQQQQEPTQAEN), 113–135 (QEPPATSGSEEEQQQQEPTQAED), 136–158 (QQPPATSGSEEEQQQQESTQAEN), and 159–181 (QEPSDSAGEGQETQPEEGNVESP). Residues 67–181 (EEPPATSGSE…QPEEGNVESP (115 aa)) are 5 X 23 AA tandem repeats. Residues 197 to 216 (PEEKPPAPKTQEEPQHDSGR) are compositionally biased toward basic and acidic residues.

In terms of tissue distribution, submandibular gland acinar cells.

The protein localises to the secreted. GRP proteins have a marked affinity for hydroxyapatite. They may play a role in the formation of the protective acquired pellicle at the saliva-tooth interface. In Rattus norvegicus (Rat), this protein is Submandibular gland secretory Glx-rich protein CA (Grpca).